A 302-amino-acid polypeptide reads, in one-letter code: DDRGK domain-containing protein 1 (302 aa).

Residues 1 to 5 lie on the Lumenal side of the membrane; the sequence is MDGGG. Residues 6-26 form a helical membrane-spanning segment; it reads GMLGAVVCLLLVFAIFPLLLW. Residues 27–302 lie on the Cytoplasmic side of the membrane; sequence RRRSDAAHRL…DENAAAGTEL (276 aa). 2 disordered regions span residues 36–151 and 279–302; these read LPPQ…EEAR and DLEPKPQYNEESNLDENAAAGTEL. Residues 79-91 show a composition bias toward acidic residues; it reads VDDADSDLEEEIQ. A compositionally biased stretch (basic and acidic residues) spans 103 to 151; the sequence is KRQDREAQRQAEEAARDSRRTKQDRYAEMRRKKDEEREAQERLMEEEAR.

The protein belongs to the DDRGK1 family.

It is found in the endoplasmic reticulum membrane. Its function is as follows. Substrate adapter for ufmylation, the covalent attachment of the ubiquitin-like modifier UFM1 to substrate proteins. This is DDRGK domain-containing protein 1 from Oryza sativa subsp. japonica (Rice).